Consider the following 225-residue polypeptide: Methylthioribulose-1-phosphate dehydratase (225 aa).

Positions 106 and 108 each coordinate Zn(2+).

It belongs to the aldolase class II family. MtnB subfamily. The cofactor is Zn(2+).

The catalysed reaction is 5-(methylsulfanyl)-D-ribulose 1-phosphate = 5-methylsulfanyl-2,3-dioxopentyl phosphate + H2O. The protein operates within amino-acid biosynthesis; L-methionine biosynthesis via salvage pathway; L-methionine from S-methyl-5-thio-alpha-D-ribose 1-phosphate: step 2/6. Catalyzes the dehydration of methylthioribulose-1-phosphate (MTRu-1-P) into 2,3-diketo-5-methylthiopentyl-1-phosphate (DK-MTP-1-P). This chain is Methylthioribulose-1-phosphate dehydratase, found in Xanthomonas oryzae pv. oryzae (strain PXO99A).